The sequence spans 290 residues: CMRF35-like molecule 1 (290 aa).

The first 19 residues, 1–19, serve as a signal peptide directing secretion; that stretch reads MPLLTLYLLLFWLSGYSIV. The region spanning 20 to 126 is the Ig-like V-type domain; the sequence is TQITGPTTVN…LGVTVQVTID (107 aa). The Extracellular portion of the chain corresponds to 20–156; sequence TQITGPTTVN…DNRHKLLKLS (137 aa). Cystine bridges form between Cys-40–Cys-108 and Cys-54–Cys-62. Asn-88 is a glycosylation site (N-linked (GlcNAc...) asparagine). The chain crosses the membrane as a helical span at residues 157–177; sequence VLLPLIFTILLLLLVAASLLA. Over 178–290 the chain is Cytoplasmic; sequence WRMMKYQQKA…PTEYSTISRP (113 aa). Positions 267–290 are disordered; that stretch reads GHLSSHLPGRGPEEPTEYSTISRP.

Belongs to the CD300 family. In terms of assembly, interacts with PTPN6/SHP-1 in a tyrosine phosphorylation dependent manner. Interacts with IL4R. In terms of processing, phosphorylated on tyrosine. As to expression, highly expressed in spleen, peripheral blood leukocyte and monocyte, and lung. Weakly expressed in thymus, heart, brain, placenta, liver, skeletal muscle, kidney, pancreas, prostate, testis, ovary, small intestine or colon. Expressed selectively in monocytes and monocyte-related cells.

The protein localises to the cell membrane. In terms of biological role, acts as an inhibitory receptor for myeloid cells and mast cells. Positively regulates the phagocytosis of apoptotic cells (efferocytosis) via phosphatidylserine (PS) recognition; recognizes and binds PS as a ligand which is expressed on the surface of apoptotic cells. Plays an important role in the maintenance of immune homeostasis, by promoting macrophage-mediated efferocytosis and by inhibiting dendritic cell-mediated efferocytosis. Negatively regulates Fc epsilon receptor-dependent mast cell activation and allergic responses via binding to ceramide and sphingomyelin which act as ligands. May act as a coreceptor for interleukin 4 (IL-4). Associates with and regulates IL-4 receptor alpha-mediated responses by augmenting IL-4- and IL-13-induced signaling. Negatively regulates the Toll-like receptor (TLR) signaling mediated by MYD88 and TRIF through activation of PTPN6/SHP-1 and PTPN11/SHP-2. Inhibits osteoclast formation. Induces macrophage cell death upon engagement. In Homo sapiens (Human), this protein is CMRF35-like molecule 1 (CD300LF).